The sequence spans 237 residues: Ribosomal RNA small subunit methyltransferase G (237 aa).

Residues glycine 76, phenylalanine 81, 99 to 101, 128 to 129, and arginine 147 contribute to the S-adenosyl-L-methionine site; these read DSS and IE.

The protein belongs to the methyltransferase superfamily. RNA methyltransferase RsmG family.

The protein localises to the cytoplasm. Its function is as follows. Specifically methylates the N7 position of a guanine in 16S rRNA. This chain is Ribosomal RNA small subunit methyltransferase G, found in Prochlorococcus marinus (strain MIT 9312).